Consider the following 237-residue polypeptide: MTPEDFYMALKELGFDLSQKQKDQFQRYFELLVEWNEKINLTAITDKDEVFLKHFYDSLAPVLQGHIKNQSIQLLDIGAGAGFPSLPIKILCPNLDVTIIDSLNKRITFLNFLSDELGLSGVHFYHGRAEDFGQDKAFRAQFDIVTARAVARMQVLSELTIPFLKVGGQLIALKAAAADQELVDARNALNVLFAKPILNENYKLPNGDGRNITIIDKKKETPNKYPRRAGIPNKKPL.

S-adenosyl-L-methionine is bound by residues glycine 78, phenylalanine 83, 129–130 (AE), and arginine 148.

The protein belongs to the methyltransferase superfamily. RNA methyltransferase RsmG family.

The protein resides in the cytoplasm. Functionally, specifically methylates the N7 position of a guanine in 16S rRNA. The polypeptide is Ribosomal RNA small subunit methyltransferase G (Streptococcus thermophilus (strain CNRZ 1066)).